The sequence spans 350 residues: Protein RecA (350 aa).

67 to 74 (GPESSGKT) contacts ATP.

This sequence belongs to the RecA family.

Its subcellular location is the cytoplasm. Functionally, can catalyze the hydrolysis of ATP in the presence of single-stranded DNA, the ATP-dependent uptake of single-stranded DNA by duplex DNA, and the ATP-dependent hybridization of homologous single-stranded DNAs. It interacts with LexA causing its activation and leading to its autocatalytic cleavage. The protein is Protein RecA of Chlamydia felis (strain Fe/C-56) (Chlamydophila felis).